Consider the following 286-residue polypeptide: Bifunctional protein FolD (286 aa).

NADP(+)-binding positions include 166 to 168 (GAS) and isoleucine 232.

The protein belongs to the tetrahydrofolate dehydrogenase/cyclohydrolase family. As to quaternary structure, homodimer.

The enzyme catalyses (6R)-5,10-methylene-5,6,7,8-tetrahydrofolate + NADP(+) = (6R)-5,10-methenyltetrahydrofolate + NADPH. The catalysed reaction is (6R)-5,10-methenyltetrahydrofolate + H2O = (6R)-10-formyltetrahydrofolate + H(+). The protein operates within one-carbon metabolism; tetrahydrofolate interconversion. Its function is as follows. Catalyzes the oxidation of 5,10-methylenetetrahydrofolate to 5,10-methenyltetrahydrofolate and then the hydrolysis of 5,10-methenyltetrahydrofolate to 10-formyltetrahydrofolate. The protein is Bifunctional protein FolD of Shewanella piezotolerans (strain WP3 / JCM 13877).